We begin with the raw amino-acid sequence, 308 residues long: V-type immunoglobulin domain-containing suppressor of T-cell activation (308 aa).

The N-terminal stretch at 1–32 is a signal peptide; the sequence is MGVPAVPEASSPRWGTLLLAIFLAASRGLVAA. In terms of domain architecture, Ig-like V-type spans 33–167; that stretch reads FKVTTPYSLY…RFYGSMELQV (135 aa). Residues 33-191 lie on the Extracellular side of the membrane; that stretch reads FKVTTPYSLY…EQDSDSITAA (159 aa). Residues N49, N91, and N127 are each glycosylated (N-linked (GlcNAc...) asparagine). C54 and C145 are disulfide-bonded. A helical membrane pass occupies residues 192–212; the sequence is ALATGACIVGILCLPLILLLV. Residues 213 to 308 lie on the Cytoplasmic side of the membrane; it reads YKQRQVASHR…VPDSPNSEAI (96 aa). Residues 230-308 are disordered; the sequence is MDSNTQGIEN…VPDSPNSEAI (79 aa). The residue at position 232 (S232) is a Phosphoserine.

Post-translationally, at the cell surface, may be cleaved by MMP14. In terms of processing, N-glycosylated. As to expression, expressed in spleen, thymus, bone marrow, lymph node, and in T-cells within the lamina propria of the small intestine. Detected on CD4+ and CD8+ T-cells, bone marrow-derived dendritic cells (BMDCs), peritoneal macrophages, neutrophils, and natural killer (NK) cells. In spleen and lymph nodes, highly expressed on CD4+ T-cell populations, and at lower levels on CD8+ T-cells. In thymus, has low expression on CD4+ cells and CD8+ cells, and not detected on CD4+CD8+ cells. Expressed in splenic and peritoneal CD11b cells. Not detected in most B cells and NK cells (at protein level). Also detected at lower levels in non-hematopoeitic tissues such as heart, brain, lung, kidney, muscle, ovary, and testis.

It localises to the cell membrane. Immunoregulatory receptor which inhibits the T-cell response. May promote differentiation of embryonic stem cells, by inhibiting BMP4 signaling. May stimulate MMP14-mediated MMP2 activation. The chain is V-type immunoglobulin domain-containing suppressor of T-cell activation from Mus musculus (Mouse).